The sequence spans 687 residues: Glycine--tRNA ligase beta subunit (687 aa).

The protein belongs to the class-II aminoacyl-tRNA synthetase family. Tetramer of two alpha and two beta subunits.

Its subcellular location is the cytoplasm. The catalysed reaction is tRNA(Gly) + glycine + ATP = glycyl-tRNA(Gly) + AMP + diphosphate. The protein is Glycine--tRNA ligase beta subunit of Lactobacillus helveticus (strain DPC 4571).